Reading from the N-terminus, the 575-residue chain is Delta-1-pyrroline-5-carboxylate dehydrogenase, mitochondrial (575 aa).

297 to 302 (GKIQSG) contributes to the NAD(+) binding site. E317 functions as the Proton acceptor in the catalytic mechanism. The active-site Nucleophile is the C351.

Belongs to the aldehyde dehydrogenase family.

It localises to the mitochondrion inner membrane. The enzyme catalyses L-glutamate 5-semialdehyde + NAD(+) + H2O = L-glutamate + NADH + 2 H(+). Its pathway is amino-acid degradation; L-proline degradation into L-glutamate; L-glutamate from L-proline: step 2/2. The protein is Delta-1-pyrroline-5-carboxylate dehydrogenase, mitochondrial (PUT2) of Saccharomyces cerevisiae (strain ATCC 204508 / S288c) (Baker's yeast).